Here is a 92-residue protein sequence, read N- to C-terminus: YcgL domain-containing protein Sbal_1869 (92 aa).

The 85-residue stretch at 1–85 (MLCAVYKSSR…PQVNLLAEHK (85 aa)) folds into the YcgL domain.

The polypeptide is YcgL domain-containing protein Sbal_1869 (Shewanella baltica (strain OS155 / ATCC BAA-1091)).